The chain runs to 450 residues: Phosphoglucosamine mutase (450 aa).

Ser-101 acts as the Phosphoserine intermediate in catalysis. 4 residues coordinate Mg(2+): Ser-101, Asp-240, Asp-242, and Asp-244. Position 101 is a phosphoserine (Ser-101).

Belongs to the phosphohexose mutase family. Mg(2+) serves as cofactor. Activated by phosphorylation.

It catalyses the reaction alpha-D-glucosamine 1-phosphate = D-glucosamine 6-phosphate. In terms of biological role, catalyzes the conversion of glucosamine-6-phosphate to glucosamine-1-phosphate. The protein is Phosphoglucosamine mutase of Streptococcus sanguinis (strain SK36).